The chain runs to 285 residues: Probable cobalamin biosynthesis protein CobD (285 aa).

Transmembrane regions (helical) follow at residues 10 to 32 (LIDL…GKVI), 45 to 67 (YLDF…ILSH), 145 to 167 (VIAP…RAVN), and 266 to 283 (VYWI…IILY).

The protein belongs to the CobD/CbiB family.

The protein localises to the cell membrane. It participates in cofactor biosynthesis; adenosylcobalamin biosynthesis. Its function is as follows. Converts cobyric acid to cobinamide by the addition of aminopropanol on the F carboxylic group. In Pyrococcus furiosus (strain ATCC 43587 / DSM 3638 / JCM 8422 / Vc1), this protein is Probable cobalamin biosynthesis protein CobD.